A 364-amino-acid polypeptide reads, in one-letter code: Chorismate synthase (364 aa).

R48 lines the NADP(+) pocket. Residues 131–133 (RSS), 243–244 (NA), G288, 303–307 (KPTSS), and R329 each bind FMN.

Belongs to the chorismate synthase family. As to quaternary structure, homotetramer. It depends on FMNH2 as a cofactor.

The catalysed reaction is 5-O-(1-carboxyvinyl)-3-phosphoshikimate = chorismate + phosphate. It participates in metabolic intermediate biosynthesis; chorismate biosynthesis; chorismate from D-erythrose 4-phosphate and phosphoenolpyruvate: step 7/7. Its function is as follows. Catalyzes the anti-1,4-elimination of the C-3 phosphate and the C-6 proR hydrogen from 5-enolpyruvylshikimate-3-phosphate (EPSP) to yield chorismate, which is the branch point compound that serves as the starting substrate for the three terminal pathways of aromatic amino acid biosynthesis. This reaction introduces a second double bond into the aromatic ring system. The polypeptide is Chorismate synthase (Brucella anthropi (strain ATCC 49188 / DSM 6882 / CCUG 24695 / JCM 21032 / LMG 3331 / NBRC 15819 / NCTC 12168 / Alc 37) (Ochrobactrum anthropi)).